We begin with the raw amino-acid sequence, 94 residues long: MSAEPEVRLTAWVHGRVQGVGFRWWTRSRALELGLTGFAANKPDGRVQVVAQGSREDCERLLGLLEGGDTPGRVDKVIADWSDAREQITGFHER.

The 87-residue stretch at 8-94 folds into the Acylphosphatase-like domain; it reads RLTAWVHGRV…REQITGFHER (87 aa). Catalysis depends on residues Arg23 and Asn41.

The protein belongs to the acylphosphatase family.

It catalyses the reaction an acyl phosphate + H2O = a carboxylate + phosphate + H(+). The chain is Acylphosphatase (acyP) from Mycobacterium sp. (strain KMS).